A 297-amino-acid polypeptide reads, in one-letter code: Vacuolar protein sorting-associated protein 26C (297 aa).

This sequence belongs to the VPS26 family. Component of the commander complex that is essential for endosomal recycling of transmembrane cargos; the commander complex is composed of the CCC subcomplex and the retriever subcomplex. Component of the heterotrimeric retriever complex consisting of VPS26C, VPS29 and VPS35L; within the complex interacts with VPS35L. Interacts with SNX17 (via C-terminus); the interaction is direct and associates SNX17 with the retriever complex. Interacts with SNX31; the interaction is direct.

The protein localises to the endosome. Functionally, component of the commander complex that is essential for endosomal recycling of transmembrane cargos; the commander complex is composed of the CCC subcomplex and the retriever subcomplex. Component of the retriever complex, which is a heterotrimeric complex related to retromer cargo-selective complex (CSC) and essential for retromer-independent retrieval and recycling of numerous cargos such as integrin alpha-5/beta-1 (ITGA5:ITGB1). The recruitment of the retriever complex to the endosomal membrane involves CCC and WASH complexes. In the endosomes, drives the retriever and recycling of NxxY-motif-containing cargo proteins by coupling to SNX17, a cargo essential for the homeostatic maintenance of numerous cell surface proteins associated with processes that include cell migration, cell adhesion, nutrient supply and cell signaling. In Mus musculus (Mouse), this protein is Vacuolar protein sorting-associated protein 26C.